Consider the following 477-residue polypeptide: Cysteine--tRNA ligase (477 aa).

C29 is a binding site for Zn(2+). Residues 31–41 (PTVYDYPHLGH) carry the 'HIGH' region motif. Zn(2+) contacts are provided by C209, H234, and E238. Residues 266–270 (KMSKS) carry the 'KMSKS' region motif. Residue K269 coordinates ATP.

It belongs to the class-I aminoacyl-tRNA synthetase family. Requires Zn(2+) as cofactor.

It localises to the cytoplasm. The catalysed reaction is tRNA(Cys) + L-cysteine + ATP = L-cysteinyl-tRNA(Cys) + AMP + diphosphate. The polypeptide is Cysteine--tRNA ligase (cysS) (Pyrococcus abyssi (strain GE5 / Orsay)).